A 339-amino-acid polypeptide reads, in one-letter code: RNA 3'-terminal phosphate cyclase (339 aa).

ATP contacts are provided by residues Asp109 and 286–290 (HLADQ). The active-site Tele-AMP-histidine intermediate is His310.

The protein belongs to the RNA 3'-terminal cyclase family. Type 1 subfamily.

Its subcellular location is the cytoplasm. It carries out the reaction a 3'-end 3'-phospho-ribonucleotide-RNA + ATP = a 3'-end 2',3'-cyclophospho-ribonucleotide-RNA + AMP + diphosphate. Catalyzes the conversion of 3'-phosphate to a 2',3'-cyclic phosphodiester at the end of RNA. The mechanism of action of the enzyme occurs in 3 steps: (A) adenylation of the enzyme by ATP; (B) transfer of adenylate to an RNA-N3'P to produce RNA-N3'PP5'A; (C) and attack of the adjacent 2'-hydroxyl on the 3'-phosphorus in the diester linkage to produce the cyclic end product. The biological role of this enzyme is unknown but it is likely to function in some aspects of cellular RNA processing. The protein is RNA 3'-terminal phosphate cyclase of Halobacterium salinarum (strain ATCC 29341 / DSM 671 / R1).